Consider the following 114-residue polypeptide: Large ribosomal subunit protein P2 (114 aa).

The span at 74 to 83 (AAAAGGGGGD) shows a compositional bias: gly residues. The interval 74 to 114 (AAAAGGGGGDAPAAAAEEPKKEEKSEEESDEELGFSLFDDN) is disordered. Residues 98 to 114 (SEEESDEELGFSLFDDN) show a composition bias toward acidic residues.

This sequence belongs to the eukaryotic ribosomal protein P1/P2 family. P1 and P2 exist as dimers at the large ribosomal subunit. In terms of processing, phosphorylated.

In terms of biological role, plays an important role in the elongation step of protein synthesis. This chain is Large ribosomal subunit protein P2, found in Parthenium argentatum (Guayule rubber plant).